The primary structure comprises 239 residues: MQGLAGSVRVAALDIDGTLTERRGAARLDGCSIAVARLLNDLGVTSILMTGNSLPVARGVAVYLGLEGPVVAENGCVAVVGGERVHICSGRPPEGLVKRIMELGFKPSWQNEYRYHEYSLIPVKAAPGIVERASAIAEEEGYRAIWSGYALHIQPPGGGKARGVGEVLARIGAGWSEVLAIGDGENDVEVLARAGYSGAPGDAAEQAKRAAKIVARSPGARGTLEIIQRVLGGARAPAC.

Aspartate 14 functions as the Nucleophile in the catalytic mechanism. Mg(2+)-binding residues include aspartate 14 and aspartate 16. A substrate-binding site is contributed by lysine 160. Mg(2+) contacts are provided by aspartate 183 and aspartate 187.

It belongs to the archaeal SPP-like hydrolase family. It depends on Mg(2+) as a cofactor.

The enzyme catalyses 2-phosphoglycolate + H2O = glycolate + phosphate. Its function is as follows. Catalyzes the dephosphorylation of 2-phosphoglycolate. The sequence is that of Phosphoglycolate phosphatase from Aeropyrum pernix (strain ATCC 700893 / DSM 11879 / JCM 9820 / NBRC 100138 / K1).